The chain runs to 277 residues: MIGARVFCITTTALRRSPIFFFPKIPTRPVFRLSPATRPIVAMSTTSKNQEELDSIFKQKRVVRSTVRKSLKAMDPSLRTQQDEAIQKTVLEAPWFKSCKGLCAYISCKSLNEVDTSKILSEILQHPDSNTQKKLYVPWVEDKNSNMRMLHISHMEDLVANSMNILEPAPVDAQGNDREDVLQADEPIDLFILPGLAFDRCGRRLGRGGGYYDTFLKRYQDRAKEKGWRYPLMVALSYSPQILEDGSIPVTPNDVLIDALVTPSGVVPITPRATESM.

The N-terminal 48 residues, methionine 1–lysine 48, are a transit peptide targeting the mitochondrion. Lysine 60–arginine 64 serves as a coordination point for ATP. Substrate-binding positions include glutamate 113 and arginine 207–tyrosine 211. Residues glycine 206–aspartate 213 and aspartate 254 contribute to the ATP site.

The protein belongs to the 5-formyltetrahydrofolate cyclo-ligase family. Monomer.

Its subcellular location is the mitochondrion. The catalysed reaction is (6S)-5-formyl-5,6,7,8-tetrahydrofolate + ATP = (6R)-5,10-methenyltetrahydrofolate + ADP + phosphate. Its function is as follows. Contributes to tetrahydrofolate metabolism and photorespiration through the regulation of serine hydroxymethyltransferase. Prefers the pentalutamyl to the monoglutamyl form of 5-formyltetrahydrofolate. The protein is 5-formyltetrahydrofolate cyclo-ligase, mitochondrial (5FCL) of Arabidopsis thaliana (Mouse-ear cress).